Here is a 2148-residue protein sequence, read N- to C-terminus: General transcription factor 3C polypeptide 1 (2148 aa).

Over residues 473-487 the composition is skewed to acidic residues; it reads GEEAFLSDSESEEES. Disordered stretches follow at residues 473 to 568 and 587 to 609; these read GEEA…FDPH and NPKE…KPHK. Residues 491-502 are compositionally biased toward basic residues; that stretch reads GKRRGRGSRGHS. Lys-533 participates in a covalent cross-link: Glycyl lysine isopeptide (Lys-Gly) (interchain with G-Cter in SUMO2). Ser-666 is modified (phosphoserine). 2 disordered regions span residues 717–771 and 818–863; these read STAN…EKMG and TGEQ…SSWE. Composition is skewed to basic and acidic residues over residues 759 to 770 and 825 to 835; these read ESTRVKKTDEKM and HSERKTGKQEP. Glycyl lysine isopeptide (Lys-Gly) (interchain with G-Cter in SUMO2) cross-links involve residues Lys-769 and Lys-832. Ser-1062 is subject to Phosphoserine. The segment covering 1186 to 1195 has biased composition (basic and acidic residues); the sequence is EHFELDREPT. 5 disordered regions span residues 1186-1238, 1597-1627, 1823-1881, 1893-1928, and 2127-2148; these read EHFE…KKLR, KSLG…SVEV, KASG…LPAK, SPRP…ESVG, and PRPS…ATSR. Thr-1195 is subject to Phosphothreonine. Over residues 1198-1214 the composition is skewed to basic residues; the sequence is RNRKVRGGKSQKRKRLK. Positions 1228–1238 are enriched in basic and acidic residues; the sequence is EHPEAKSKKLR. Positions 1605-1616 are enriched in acidic residues; the sequence is LDDDDEEEDLDE. A phosphoserine mark is found at Ser-1624, Ser-1853, and Ser-1893. The segment covering 1903-1912 has biased composition (low complexity); sequence EAQAQFAAPE. Residues 2132–2148 show a composition bias toward polar residues; it reads SCYQSSAQPSTGVATSR.

It belongs to the TFIIIC subunit 1 family. Part of the TFIIIC subcomplex TFIIIC2, consisting of six subunits, GTF3C1, GTF3C2, GTF3C3, GTF3C4, GTF3C5 and GTF3C6. Interacts with IGHMBP2. Interacts with MAF1.

It localises to the nucleus. In terms of biological role, required for RNA polymerase III-mediated transcription. Component of TFIIIC that initiates transcription complex assembly on tRNA and is required for transcription of 5S rRNA and other stable nuclear and cytoplasmic RNAs. Binds to the box B promoter element. The polypeptide is General transcription factor 3C polypeptide 1 (Gtf3c1) (Rattus norvegicus (Rat)).